Here is a 1452-residue protein sequence, read N- to C-terminus: Receptor-type tyrosine-protein phosphatase mu (1452 aa).

An N-terminal signal peptide occupies residues 1 to 20; the sequence is MRTLGTCLVTLAGLLLTAAG. Over 21-742 the chain is Extracellular; it reads ETFSGGCLFD…PEKQTDHTVK (722 aa). In terms of domain architecture, MAM spans 22–184; it reads TFSGGCLFDE…VKVLGHPCTR (163 aa). Cysteines 27 and 36 form a disulfide. Asparagine 72, asparagine 92, asparagine 131, and asparagine 249 each carry an N-linked (GlcNAc...) asparagine glycan. 2 disulfide bridges follow: cysteine 96–cysteine 182 and cysteine 206–cysteine 260. Residues 186 to 277 form the Ig-like C2-type domain; sequence PHFLRIQNVE…VGISNYAELV (92 aa). Fibronectin type-III domains follow at residues 284 to 379, 382 to 480, 481 to 587, and 589 to 671; these read PIAP…CADP, GPRK…TDED, LPGA…SAPS, and PAYE…DSLQ. N-linked (GlcNAc...) asparagine glycosylation is found at asparagine 406, asparagine 414, asparagine 454, asparagine 534, asparagine 544, asparagine 598, asparagine 651, and asparagine 681. The helical transmembrane segment at 743–764 threads the bilayer; it reads IAGVIAGILLFVIIFLGVVLVM. Topologically, residues 765 to 1452 are cytoplasmic; sequence KKRKLAKKRK…EVALEYLNSG (688 aa). Serine 821 carries the phosphoserine modification. Tyrosine-protein phosphatase domains follow at residues 900 to 1154 and 1186 to 1448; these read FKEE…ILEA and IKEE…ALEY. Substrate-binding positions include aspartate 1063, 1095–1101, and glutamine 1139; that span reads CSAGAGR. Cysteine 1095 functions as the Phosphocysteine intermediate in the catalytic mechanism. The active-site Phosphocysteine intermediate is the cysteine 1389.

It belongs to the protein-tyrosine phosphatase family. Receptor class 2B subfamily. As to quaternary structure, homodimer. In terms of tissue distribution, most abundant in lung, less in brain and heart.

It is found in the cell membrane. The enzyme catalyses O-phospho-L-tyrosyl-[protein] + H2O = L-tyrosyl-[protein] + phosphate. Its function is as follows. Receptor protein-tyrosine phosphatase that mediates homotypic cell-cell interactions and plays a role in adipogenic differentiation via modulation of p120 catenin/CTNND1 phosphorylation. Promotes CTNND1 dephosphorylation and prevents its cytoplasmic localization where it inhibits SLC2A4 membrane trafficking. In turn, SLC2A4 is directed to the plasma membrane and performs its glucose transporter function. In Mus musculus (Mouse), this protein is Receptor-type tyrosine-protein phosphatase mu (Ptprm).